The following is a 434-amino-acid chain: Trigger factor (434 aa).

Residues 160-245 (GDKVKMNFVG…LTEVLAANLP (86 aa)) enclose the PPIase FKBP-type domain.

It belongs to the FKBP-type PPIase family. Tig subfamily.

The protein resides in the cytoplasm. The catalysed reaction is [protein]-peptidylproline (omega=180) = [protein]-peptidylproline (omega=0). In terms of biological role, involved in protein export. Acts as a chaperone by maintaining the newly synthesized protein in an open conformation. Functions as a peptidyl-prolyl cis-trans isomerase. This chain is Trigger factor, found in Shewanella sp. (strain ANA-3).